We begin with the raw amino-acid sequence, 220 residues long: MTITSLDGYRWLKNDIIRGNFQPDEKLRMSLLTSRYALGVGPLREALSQLVAERLVTVVNQKGYRVASMSEQELLDIFDARANMEAMLVSLAIARGGDEWEADVLAKAHLLSKLEACDASEKMLDEWDLRHQAFHTAIVAGCGSHYLLQMRERLFDLAARYRFIWLRRTVLSVEMLEDKHDQHQTLTAAVLARDTARASELMRQHLLTPIPIIQQAMAGN.

Residues 1 to 69 (MTITSLDGYR…NQKGYRVASM (69 aa)) form the HTH gntR-type domain. Residues 29 to 48 (MSLLTSRYALGVGPLREALS) constitute a DNA-binding region (H-T-H motif).

The protein resides in the cytoplasm. The repressive effect at the glaH promoter site is specifically relieved upon glutarate binding. Functionally, negatively regulates the expression of the glaH-lhgD-gabDTP operon in a temporal manner during entry into stationary phase or during the first few hours of carbon starvation. Thereby is involved in the regulation of a L-lysine degradation pathway that proceeds via cadaverine, glutarate and L-2-hydroxyglutarate. Binds to two primary and two secondary sites in the promoter region of the glaH operon with the consensus sequences TTGTN5TTTT and ATGTN5TTTT of the primary sites, each separated by six nucleotides. The protein is HTH-type transcriptional repressor GlaR of Escherichia coli (strain K12).